Here is a 127-residue protein sequence, read N- to C-terminus: Large ribosomal subunit protein bL12 (127 aa).

The interval 98-127 (PKPVKNGVSKEEAEEAKKQLVESGAEVEIK) is disordered. Residues 105 to 117 (VSKEEAEEAKKQL) show a composition bias toward basic and acidic residues.

It belongs to the bacterial ribosomal protein bL12 family. Homodimer. Part of the ribosomal stalk of the 50S ribosomal subunit. Forms a multimeric L10(L12)X complex, where L10 forms an elongated spine to which 2 to 4 L12 dimers bind in a sequential fashion. Binds GTP-bound translation factors.

Functionally, forms part of the ribosomal stalk which helps the ribosome interact with GTP-bound translation factors. Is thus essential for accurate translation. The sequence is that of Large ribosomal subunit protein bL12 from Geobacter sulfurreducens (strain ATCC 51573 / DSM 12127 / PCA).